Consider the following 183-residue polypeptide: uncharacterized protein (183 aa).

Belongs to the asfivirus S183L family.

This is an uncharacterized protein from Ornithodoros (relapsing fever ticks).